The sequence spans 375 residues: Queuine tRNA-ribosyltransferase (375 aa).

Aspartate 89 (proton acceptor) is an active-site residue. Residues 89-93 (DSGGF), aspartate 143, glutamine 187, and glycine 214 each bind substrate. The tract at residues 245-251 (GVGKPED) is RNA binding. Catalysis depends on aspartate 264, which acts as the Nucleophile. The interval 269–273 (TRNAR) is RNA binding; important for wobble base 34 recognition. Zn(2+) contacts are provided by cysteine 302, cysteine 304, cysteine 307, and histidine 333.

It belongs to the queuine tRNA-ribosyltransferase family. As to quaternary structure, homodimer. Within each dimer, one monomer is responsible for RNA recognition and catalysis, while the other monomer binds to the replacement base PreQ1. It depends on Zn(2+) as a cofactor.

The catalysed reaction is 7-aminomethyl-7-carbaguanine + guanosine(34) in tRNA = 7-aminomethyl-7-carbaguanosine(34) in tRNA + guanine. Its pathway is tRNA modification; tRNA-queuosine biosynthesis. In terms of biological role, catalyzes the base-exchange of a guanine (G) residue with the queuine precursor 7-aminomethyl-7-deazaguanine (PreQ1) at position 34 (anticodon wobble position) in tRNAs with GU(N) anticodons (tRNA-Asp, -Asn, -His and -Tyr). Catalysis occurs through a double-displacement mechanism. The nucleophile active site attacks the C1' of nucleotide 34 to detach the guanine base from the RNA, forming a covalent enzyme-RNA intermediate. The proton acceptor active site deprotonates the incoming PreQ1, allowing a nucleophilic attack on the C1' of the ribose to form the product. After dissociation, two additional enzymatic reactions on the tRNA convert PreQ1 to queuine (Q), resulting in the hypermodified nucleoside queuosine (7-(((4,5-cis-dihydroxy-2-cyclopenten-1-yl)amino)methyl)-7-deazaguanosine). The polypeptide is Queuine tRNA-ribosyltransferase (Salmonella enteritidis PT4 (strain P125109)).